The sequence spans 1122 residues: RecBCD enzyme subunit RecC (1122 aa).

It belongs to the RecC family. In terms of assembly, heterotrimer of RecB, RecC and RecD. All subunits contribute to DNA-binding. Interacts with YgbT (Cas1). (Microbial infection) Lambda virus GamS protein interacts with the enzyme without displacing any of the subunits.

Its activity is regulated as follows. After reacting with DNA bearing a Chi site the holoenzyme is disassembled and loses exonuclease activity, DNA unwinding and Chi-directed DNA cleavage; RecB remains complexed with ssDNA, which may prevent holoenzyme reassembly. High levels of Mg(2+) (13 mM MgCl(2+)) or incubation with DNase allow holoenzyme reassembly, suggesting it is DNA bound to RecB that prevents reassembly. (Microbial infection) RecBCD is inhibited by the lambda virus gam protein (both GamL and GamS isoforms); in vitro a short preincubation prior to adding DNA results in maximal inhibition. A helicase/nuclease that prepares dsDNA breaks (DSB) for recombinational DNA repair. Binds to DSBs and unwinds DNA via a rapid (&gt;1 kb/second) and highly processive (&gt;30 kb) ATP-dependent bidirectional helicase. Unwinds dsDNA until it encounters a Chi (crossover hotspot instigator, 5'-GCTGGTGG-3') sequence from the 3' direction. Cuts ssDNA a few nucleotides 3' to Chi site, by nicking one strand or switching the strand degraded (depending on the reaction conditions). The properties and activities of the enzyme are changed at Chi. The Chi-altered holoenzyme produces a long 3'-ssDNA overhang which facilitates RecA-binding to the ssDNA for homologous DNA recombination and repair. Holoenzyme degrades any linearized DNA that is unable to undergo homologous recombination. In the holoenzyme this subunit almost certainly recognizes the wild-type Chi sequence, when added to isolated RecB increases its ATP-dependent helicase processivity. The RecBC complex requires the RecD subunit for nuclease activity, but can translocate along ssDNA in both directions. The RecBCD complex does not unwind G-quadruplex DNA. The polypeptide is RecBCD enzyme subunit RecC (Escherichia coli (strain K12)).